Here is a 230-residue protein sequence, read N- to C-terminus: NAD(P)H-hydrate epimerase (230 aa).

Positions Ala11–Leu218 constitute a YjeF N-terminal domain. Residue Asn61–Asp65 participates in (6S)-NADPHX binding. K(+) contacts are provided by Asn62 and Asp126. (6S)-NADPHX is bound by residues Gly130 to Pro136 and Asp159. Residue Ser162 participates in K(+) binding.

It belongs to the NnrE/AIBP family. K(+) is required as a cofactor.

The catalysed reaction is (6R)-NADHX = (6S)-NADHX. It carries out the reaction (6R)-NADPHX = (6S)-NADPHX. Catalyzes the epimerization of the S- and R-forms of NAD(P)HX, a damaged form of NAD(P)H that is a result of enzymatic or heat-dependent hydration. This is a prerequisite for the S-specific NAD(P)H-hydrate dehydratase to allow the repair of both epimers of NAD(P)HX. This Drosophila erecta (Fruit fly) protein is NAD(P)H-hydrate epimerase.